Consider the following 121-residue polypeptide: MSEHRQALGRYGEELAVKHIRQAGLTVLECNYRCPLGEMDIIAREGETIIFIEVRTRSTGSRGWGEESITAKKRERLYRIATHYLKYRNYKEWPSLRFDLIAIRCQDQEGKQPDIIWIRGI.

This sequence belongs to the UPF0102 family.

The sequence is that of UPF0102 protein DSY2577 from Desulfitobacterium hafniense (strain Y51).